The chain runs to 257 residues: Matrix protein (257 aa).

The Nuclear export signal signature appears at Val-193–Ile-205.

This sequence belongs to the pneumovirinae M protein family. Forms dimers. Forms higher-order oligomers. Interacts with glycoprotein G (via N-terminus). Interacts with protein M2-1; this interaction directs the matrix protein localization to cytoplasmic inclusions comprising viral proteins L, N, P, and M2-1 and mediates the matrix protein association with the nucleocapsid.

Its subcellular location is the virion. The protein resides in the host cytoplasm. It is found in the host nucleus. The protein localises to the host cell membrane. Functionally, plays a crucial role in virus assembly into filaments and budding. Early in infection, localizes in the nucleus where it may inhibit host cell transcription. Later in infection, traffics to the cytoplasm to associate with inclusion bodies, the site of viral transcription and replication. During virus assembly and budding, acts as a bridge between the nucleocapsid and the lipid bilayer. The sequence is that of Matrix protein (M) from Murine pneumonia virus (strain 15) (MPV).